Reading from the N-terminus, the 314-residue chain is Pectin lyase (314 aa).

The active site involves arginine 202.

Belongs to the polysaccharide lyase 1 family.

The enzyme catalyses Eliminative cleavage of (1-&gt;4)-alpha-D-galacturonan methyl ester to give oligosaccharides with 4-deoxy-6-O-methyl-alpha-D-galact-4-enuronosyl groups at their non-reducing ends.. In Pectobacterium carotovorum (Erwinia carotovora), this protein is Pectin lyase (pnl).